The following is a 113-amino-acid chain: uncharacterized protein (113 aa).

A run of 3 helical transmembrane segments spans residues 9–31 (IFPS…SVIY), 36–58 (VLTI…YKFQ), and 71–90 (IMAL…VVAV).

It localises to the cell membrane. This is an uncharacterized protein from Archaeoglobus fulgidus (strain ATCC 49558 / DSM 4304 / JCM 9628 / NBRC 100126 / VC-16).